We begin with the raw amino-acid sequence, 314 residues long: CD-NTase-associated protein 12 (314 aa).

A TIR domain is found at 5-129; sequence RIFIGSSSEE…VKGISLARFK (125 aa). Residues 160–314 form an STING domain region; that stretch reads SSTLAAVYYE…DLIKIVDEDN (155 aa). The 3',3'-c-di-GMP site is built by Phe-171, Pro-234, and Asp-252.

It in the C-terminal section; belongs to the bacterial STING family. In terms of assembly, homodimer. Forms homodimers; in the presence of c-di-GMP forms filaments with an ordered array of parallel-stacked subunits.

It carries out the reaction NAD(+) + H2O = ADP-D-ribose + nicotinamide + H(+). Its activity is regulated as follows. NAD(+) hydrolase activity is strongly stimulated by c-di-GMP, weakly by 3'3'-cGAMP, very weakly by c-di-AMP but not at all by 2'3'-cGAMP. Self-association of TIR domains is required for NADase activity. Its function is as follows. Effector protein of a CBASS antiviral system with NAD(+) hydrolase activity. CBASS (cyclic oligonucleotide-based antiphage signaling system) provides immunity against bacteriophage. The CD-NTase protein synthesizes cyclic nucleotides in response to infection; these serve as specific second messenger signals. The signals activate a diverse range of effectors, leading to bacterial cell death and thus abortive phage infection. A type I-(GG) CBASS system. Binds c-di-GMP (synthesized by the cognate CdnE encoded upstream in the same operon), and about 10-fold less well 3'3'-cGAMP, but not c-di-AMP, 2'-3'-cGAMP or cUMP-AMP (tested without the N-terminal TIR domain). Upon activation by c-di-GMP forms filaments which hydrolyze NAD(+); filament formation is required for enzyme activation. The polypeptide is CD-NTase-associated protein 12 (Capnocytophaga granulosa (strain ATCC 51502 / DSM 11449 / JCM 8566 / LMG 16022 / NCTC 12948 / B0611)).